Consider the following 125-residue polypeptide: Cytochrome c' (125 aa).

Heme c-binding residues include Arg-10, Glu-67, Cys-116, Cys-119, and His-120.

In terms of assembly, homodimer. Post-translationally, binds 1 heme c group covalently per subunit.

Cytochrome c' is the most widely occurring bacterial c-type cytochrome. Cytochromes c' are high-spin proteins and the heme has no sixth ligand. Their exact function is not known. This chain is Cytochrome c', found in Pararhodospirillum photometricum (Rhodospirillum photometricum).